The sequence spans 144 residues: 3-hydroxyacyl-[acyl-carrier-protein] dehydratase FabZ (144 aa).

Histidine 48 is an active-site residue.

The protein belongs to the thioester dehydratase family. FabZ subfamily.

The protein localises to the cytoplasm. The catalysed reaction is a (3R)-hydroxyacyl-[ACP] = a (2E)-enoyl-[ACP] + H2O. In terms of biological role, involved in unsaturated fatty acids biosynthesis. Catalyzes the dehydration of short chain beta-hydroxyacyl-ACPs and long chain saturated and unsaturated beta-hydroxyacyl-ACPs. The chain is 3-hydroxyacyl-[acyl-carrier-protein] dehydratase FabZ from Bacillus anthracis (strain A0248).